The sequence spans 464 residues: Putative protein TIC 214 C-terminal part (464 aa).

The protein belongs to the TIC214 family. In terms of assembly, part of the Tic complex.

The protein localises to the plastid. Its subcellular location is the chloroplast. Functionally, involved in protein precursor import into chloroplasts. May be part of an intermediate translocation complex acting as a protein-conducting channel at the inner envelope. This chain is Putative protein TIC 214 C-terminal part, found in Marchantia polymorpha (Common liverwort).